A 98-amino-acid chain; its full sequence is NADH-ubiquinone oxidoreductase chain 4L (98 aa).

3 helical membrane passes run 1 to 21 (MTLI…GLLM), 29 to 49 (ALLC…LTIL), and 61 to 81 (IILL…LVMV).

It belongs to the complex I subunit 4L family. In terms of assembly, core subunit of respiratory chain NADH dehydrogenase (Complex I) which is composed of 45 different subunits.

It is found in the mitochondrion inner membrane. It carries out the reaction a ubiquinone + NADH + 5 H(+)(in) = a ubiquinol + NAD(+) + 4 H(+)(out). In terms of biological role, core subunit of the mitochondrial membrane respiratory chain NADH dehydrogenase (Complex I) which catalyzes electron transfer from NADH through the respiratory chain, using ubiquinone as an electron acceptor. Part of the enzyme membrane arm which is embedded in the lipid bilayer and involved in proton translocation. The sequence is that of NADH-ubiquinone oxidoreductase chain 4L (MT-ND4L) from Balaenoptera physalus (Fin whale).